The primary structure comprises 257 residues: Phosphonates import ATP-binding protein PhnC (257 aa).

An ABC transporter domain is found at 2–246 (IEFRNVSKVY…KFAEIYGDVA (245 aa)). Position 35–42 (35–42 (GLSGAGKS)) interacts with ATP.

This sequence belongs to the ABC transporter superfamily. Phosphonates importer (TC 3.A.1.9.1) family. In terms of assembly, the complex is composed of two ATP-binding proteins (PhnC), two transmembrane proteins (PhnE) and a solute-binding protein (PhnD).

It localises to the cell membrane. The catalysed reaction is phosphonate(out) + ATP + H2O = phosphonate(in) + ADP + phosphate + H(+). In terms of biological role, part of the ABC transporter complex PhnCDE involved in phosphonates import. Responsible for energy coupling to the transport system. The protein is Phosphonates import ATP-binding protein PhnC of Bacillus cereus (strain ATCC 14579 / DSM 31 / CCUG 7414 / JCM 2152 / NBRC 15305 / NCIMB 9373 / NCTC 2599 / NRRL B-3711).